A 196-amino-acid polypeptide reads, in one-letter code: Large ribosomal subunit protein uL6 (196 aa).

It belongs to the universal ribosomal protein uL6 family. Part of the 50S ribosomal subunit.

In terms of biological role, this protein binds to the 23S rRNA, and is important in its secondary structure. It is located near the subunit interface in the base of the L7/L12 stalk, and near the tRNA binding site of the peptidyltransferase center. The protein is Large ribosomal subunit protein uL6 of Pyrobaculum aerophilum (strain ATCC 51768 / DSM 7523 / JCM 9630 / CIP 104966 / NBRC 100827 / IM2).